Reading from the N-terminus, the 1525-residue chain is Receptor-type guanylate cyclase Gyc76C (1525 aa).

A signal peptide spans 1 to 19; the sequence is MTRWPFNLLLLLSVAVRDC. Over 20–493 the chain is Extracellular; sequence SNHRTVLTVG…KKDDTHYTST (474 aa). Residues Asn-74, Asn-184, Asn-222, Asn-338, Asn-383, Asn-394, Asn-416, Asn-428, and Asn-458 are each glycosylated (N-linked (GlcNAc...) asparagine). Residues 494–514 form a helical membrane-spanning segment; it reads VAAVVLGVLLFCSGVITMSIY. The Cytoplasmic segment spans residues 515–1525; the sequence is RKWKIELEIE…AAARDRESIV (1011 aa). The Protein kinase domain occupies 547–824; that stretch reads PSKVSLMSAQ…SVIRNRLKKM (278 aa). Residues 553-561 and Lys-581 contribute to the ATP site; that span reads MSAQSYGSR. The Guanylate cyclase domain occupies 896 to 1026; that stretch reads TIYFSDIVGF…DTVNTASRME (131 aa). 3 residues coordinate Mg(2+): Asp-901, Ile-902, and Asp-945. Disordered regions lie at residues 1122–1168, 1192–1217, and 1256–1308; these read GSRR…NGLG, ETNE…LVRQ, and ESRS…VHSS. Residues 1147–1162 show a composition bias toward basic and acidic residues; sequence ESPRMVSKRDRDRERP. The segment covering 1202 to 1212 has biased composition (gly residues); it reads GGSGGVSGSGS. A compositionally biased stretch (polar residues) spans 1282–1308; sequence LSKNNSRSLDTGVSLISGNPNGEVHSS.

This sequence belongs to the adenylyl cyclase class-4/guanylyl cyclase family. As to quaternary structure, interacts with the semaphorin 1A receptor PlexA; PlexA enhances Gyc76C catalytic activity. Interacts with the PDZ domain-containing protein kermit; kermit increases cell surface expression of Gyc76C. As to expression, in the adult, widely distributed in the head and thorax with highest levels in the optic lobe and central brain and expression also detected in the retina. Expressed at similar levels in adult head and body. In females, highly expressed in oocytes with lower levels in the digestive tract. In mid-embryogenesis, enriched in the circular visceral mesoderm that overlies the migrating salivary gland and in the fat body that underlies the gland but at background levels in the gland itself. In late embryogenesis, detected in the mature salivary gland, in the somatic body wall muscles and the tendon cells to which the muscles attach, and in the constricting midgut. Also expressed in migrating tracheal cells at mid-embryogenesis and in the developed trachea at the end of embryogenesis with enrichment in the apical domains.

The protein resides in the cell membrane. The enzyme catalyses GTP = 3',5'-cyclic GMP + diphosphate. Its function is as follows. Guanylate cyclase involved in the production of the second messenger cGMP. Acts as a receptor for the NPLP1-4 peptide and modulates the innate immune IMD pathway in response to salt stress by inducing nuclear translocation of NF-kappa-B protein Rel which leads to increased expression of the antimicrobial peptide diptericin. Plays a role in Sema-1a-mediated axon repulsion which is required for the correct establishment of neuromuscular connectivity. Required in developing embryonic somatic muscle for correct patterning of ventral and lateral muscles and for localization of integrin beta-ps at developing dorsal muscle myotendinous junctions. Required for invagination, migration and lumen shape of the embryonic salivary gland by regulating the localization of the integrin-binding protein rhea/Talin to the visceral mesoderm surrounding the gland and maintaining the laminin matrix. Required in the developing wing to regulate extracellular matrix (ECM) organization by activating the cGMP-dependent protein kinase For which represses the activity of matrix metalloproteases such as Mmp2 and decreases ECM matrix reorganization. This Drosophila melanogaster (Fruit fly) protein is Receptor-type guanylate cyclase Gyc76C.